A 614-amino-acid chain; its full sequence is Zinc metalloproteinase-disintegrin-like Eoc1 (614 aa).

The N-terminal stretch at 1-19 is a signal peptide; it reads MQVLLITISLAVLPYLGSS. The propeptide occupies 20–193; it reads IILESGIVND…KASQLNLTPE (174 aa). Position 194 is a pyrrolidone carboxylic acid (Gln-194). The region spanning 202–398 is the Peptidase M12B domain; it reads KHIKVAIVAD…KMPQCILIKP (197 aa). A glycan (N-linked (GlcNAc...) asparagine) is linked at Asn-268. Disulfide bonds link Cys-313–Cys-393, Cys-353–Cys-377, and Cys-355–Cys-360. Residue His-338 coordinates Zn(2+). Residue Glu-339 is part of the active site. Positions 342 and 348 each coordinate Zn(2+). The N-linked (GlcNAc...) asparagine glycan is linked to Asn-376. Residues 406-492 enclose the Disintegrin domain; sequence PPVCGNSLVE…ECPADQFQRN (87 aa). Ca(2+) contacts are provided by Val-408, Asn-411, Leu-413, Glu-415, Glu-418, and Asp-421. Intrachain disulfides connect Cys-409–Cys-438, Cys-420–Cys-433, Cys-422–Cys-428, Cys-432–Cys-455, Cys-446–Cys-452, Cys-451–Cys-477, Cys-464–Cys-484, Cys-471–Cys-503, Cys-496–Cys-508, Cys-515–Cys-565, Cys-530–Cys-576, Cys-543–Cys-553, Cys-560–Cys-602, and Cys-596–Cys-607. The D/ECD-tripeptide motif lies at 470-472; that stretch reads ECD. An N-linked (GlcNAc...) asparagine glycan is attached at Asn-498.

Belongs to the venom metalloproteinase (M12B) family. P-III subfamily. P-IIIc sub-subfamily. As to quaternary structure, heterodimer; disulfide-linked. Zn(2+) serves as cofactor. Expressed by the venom gland.

Its subcellular location is the secreted. Its function is as follows. This metalloproteinase hydrolyzes azocasein, and oxidized insulin B-chain. Also hydrolyzes the alpha-chain (FGA) and more slowly the beta-chain of fibrinogen (FGB), without affecting the gamma-chain. Does not cleave fibrin. Inhibits endothelial cell adhesion to extracellular matrix proteins such as fibrinogen, fibronectin, vitronectin, collagen I, and collagen IV. Induces apoptosis in vascular endothelial cells. The polypeptide is Zinc metalloproteinase-disintegrin-like Eoc1 (Svmp3-Eoc1) (Echis ocellatus (Ocellated saw-scaled viper)).